The sequence spans 319 residues: Lipooligosaccharide heptosyltransferase 2 (319 aa).

Belongs to the glycosyltransferase 9 family.

The enzyme catalyses an L-alpha-D-Hep-(1-&gt;5)-[alpha-Kdo-(2-&gt;4)]-alpha-Kdo-(2-&gt;6)-lipid A + ADP-L-glycero-beta-D-manno-heptose = an L-alpha-D-Hep-(1-&gt;3)-L-alpha-D-Hep-(1-&gt;5)-[alpha-Kdo-(2-&gt;4)]-alpha-Kdo-(2-&gt;6)-lipid A + ADP + H(+). It participates in bacterial outer membrane biogenesis; LOS core biosynthesis. Functionally, glycosyltransferase involved in the biosynthesis of the core oligosaccharide region of lipooligosaccharide (LOS). Catalyzes the addition of the second heptose unit to the heptosyl-Kdo2-lipid A module. The sequence is that of Lipooligosaccharide heptosyltransferase 2 from Campylobacter jejuni subsp. jejuni serotype O:2 (strain ATCC 700819 / NCTC 11168).